A 261-amino-acid polypeptide reads, in one-letter code: Putative diacylated glycolipid transporter LprF (261 aa).

An N-terminal signal peptide occupies residues 1 to 38; it reads MNGLISQACGSHRPRRPSSLGAVAILIAATLFATVVAG. Cys-39 carries N-palmitoyl cysteine lipidation. Residue Cys-39 is the site of S-diacylglycerol cysteine attachment. The tract at residues 42–61 is disordered; sequence KPTTASSPSPGSPSPEAQQI.

The protein belongs to the LppX/LprAFG lipoprotein family. Monomer. Modified by Lgt on Cys-39 with an S-linked diacylglycerol with a mixture of C16, C18 and C19 fatty acids (palmitic, stearic and tuberculostearic acid respectively), signal peptide is removed by LspA, modified by Lnt with an amide-linked mixture of C16 and C19 fatty acids.

The protein localises to the cell membrane. Its function is as follows. Might be involved in transporting short diacylated glycolipids to the cell outer membrane. Binds glycolipids that contain a diacylated glycerophosphate or a diacylated phosphatidylinositol moiety with C14 and C16 chains (upon overexpression in M.smegmatis; M.smegmatis does not encode this gene). Overexpression in M.smegmatis increases the cell wall glycolipid LAM/LM ratio (lipoarabinomannan/lipomannan), suggesting perhaps this protein is involved in the preferential translocation of diacylated LAM to the outer cell membrane. Overexpressing M.smegmatis cells adhere less well to hexadecane droplets, indicating decrease in the hydrophobicity of the cell surface, and have a slightly increased resistance to the antibiotic ethambutol. In Mycobacterium bovis (strain ATCC BAA-935 / AF2122/97), this protein is Putative diacylated glycolipid transporter LprF (lprF).